The chain runs to 557 residues: Aerobic glycerol-3-phosphate dehydrogenase (557 aa).

An FAD-binding site is contributed by 21 to 49 (DVVIIGGGITGAGIALDASERGMKVALVE).

It belongs to the FAD-dependent glycerol-3-phosphate dehydrogenase family. The cofactor is FAD.

It is found in the cytoplasm. The catalysed reaction is a quinone + sn-glycerol 3-phosphate = dihydroxyacetone phosphate + a quinol. It participates in polyol metabolism; glycerol degradation via glycerol kinase pathway; glycerone phosphate from sn-glycerol 3-phosphate (aerobic route): step 1/1. The chain is Aerobic glycerol-3-phosphate dehydrogenase (glpD) from Staphylococcus saprophyticus subsp. saprophyticus (strain ATCC 15305 / DSM 20229 / NCIMB 8711 / NCTC 7292 / S-41).